A 250-amino-acid polypeptide reads, in one-letter code: uncharacterized protein (250 aa).

Disordered regions lie at residues 85–107 (NQFP…QSEP) and 158–198 (EPVP…AKVP). Positions 167 to 176 (PAVEQPQVKQ) are enriched in low complexity.

This is an uncharacterized protein from Mycoplasma pneumoniae (strain ATCC 29342 / M129 / Subtype 1) (Mycoplasmoides pneumoniae).